Here is a 416-residue protein sequence, read N- to C-terminus: D-amino acid dehydrogenase (416 aa).

3 to 17 serves as a coordination point for FAD; that stretch reads VVILGAGVIGVTSAW.

The protein belongs to the DadA oxidoreductase family. Requires FAD as cofactor.

The catalysed reaction is a D-alpha-amino acid + A + H2O = a 2-oxocarboxylate + AH2 + NH4(+). The protein operates within amino-acid degradation; D-alanine degradation; NH(3) and pyruvate from D-alanine: step 1/1. Its function is as follows. Oxidative deamination of D-amino acids. In Rhizorhabdus wittichii (strain DSM 6014 / CCUG 31198 / JCM 15750 / NBRC 105917 / EY 4224 / RW1) (Sphingomonas wittichii), this protein is D-amino acid dehydrogenase.